The sequence spans 343 residues: Ribosomal RNA small subunit methyltransferase C (343 aa).

Belongs to the methyltransferase superfamily. RsmC family. Monomer.

The protein resides in the cytoplasm. The enzyme catalyses guanosine(1207) in 16S rRNA + S-adenosyl-L-methionine = N(2)-methylguanosine(1207) in 16S rRNA + S-adenosyl-L-homocysteine + H(+). Functionally, specifically methylates the guanine in position 1207 of 16S rRNA in the 30S particle. In Escherichia coli (strain 55989 / EAEC), this protein is Ribosomal RNA small subunit methyltransferase C.